The chain runs to 74 residues: Putative membrane protein insertion efficiency factor (74 aa).

Belongs to the UPF0161 family.

Its subcellular location is the cell membrane. Functionally, could be involved in insertion of integral membrane proteins into the membrane. The polypeptide is Putative membrane protein insertion efficiency factor (Bacillus pumilus (strain SAFR-032)).